We begin with the raw amino-acid sequence, 196 residues long: Large ribosomal subunit protein eL15 (196 aa).

Residues 153 to 196 (DPSSRGRATRGKTSAGRKGRGMATRGKGTEKTRPSIRAYKSRGK) are disordered. The span at 159–172 (RATRGKTSAGRKGR) shows a compositional bias: basic residues.

Belongs to the eukaryotic ribosomal protein eL15 family.

The chain is Large ribosomal subunit protein eL15 from Methanosarcina acetivorans (strain ATCC 35395 / DSM 2834 / JCM 12185 / C2A).